Consider the following 884-residue polypeptide: MSGVNDIRSTFLDYFKKNGHEIVPSSPLVPRNDPTLMFTNAGMVQFKNVFTGLEKRPYATATTSQKCVRAGGKHNDLDNVGYTARHLTFFEMLGNFSFGDYFKENAIELAWKLVTEGFGLPKHRLLVTVYSEDEEAAALWKKIAGFSDDKIIRIPTSDNFWQMGDTGPCGPCSEIFIDQGENVWGGPPGSPEEDGDRFLEFWNLVFMQFEQTEPGVRNPLPRPSIDTGMGLERMACILQGVQSVFDTDLFRTLTGTIEDTIGVKAEGSASHRVIADHLRSSAFLIADGVLPSNEGRGYVLRRIMRRAMRHAQLLGAKEPLMYKLLPTLVQEMGRAYPELARAEALISETLKLEEGRFRKTLERGLSLLSDATADLDKGDMLDGETAFKLYDTYGFPLDLTQDALRAREIGVDIAGFTDAMQRQKAEARSHWAGSGEKATETIWFELREKHGATEFLGYDTEAAEGVVQAIVRDGAVAAEAKAGDKVQIVVNQTPFYGESGGQMGDAGVISSDHGKIEISDTQKRGEGLFVHLGTVIEGVVRDGDAVAMTVDHARRSRLRANHSATHLLHEALREVLGTHVAQKGSLVAPERLRFDVSHPKPMTPEELKIVEDMANEIVLQNSPVTTRLMSVDDAIAEGAMALFGEKYGDEVRVVSMGTGLHGAKSNKPYSVELCGGTHVSATGQIGLVRILGESAVGAGVRRLEAVTGESAREYLAEQDDRVKTLAASLKVQPSEVLSRVEALIDERRKLEKELADAKRKLAMGGGQGGSGDAVREVAGVKFLGKSISGVDPKDLKGLADEGKTSIGSGVVALIGVSEDGKASAVVAVTPDLVERYSAVDLVRIASVALGGKGGGGRPDMAQAGGPDGSKADEAIEAVALALAG.

Zn(2+) contacts are provided by H562, H566, C674, and H678.

The protein belongs to the class-II aminoacyl-tRNA synthetase family. It depends on Zn(2+) as a cofactor.

The protein localises to the cytoplasm. The catalysed reaction is tRNA(Ala) + L-alanine + ATP = L-alanyl-tRNA(Ala) + AMP + diphosphate. Its function is as follows. Catalyzes the attachment of alanine to tRNA(Ala) in a two-step reaction: alanine is first activated by ATP to form Ala-AMP and then transferred to the acceptor end of tRNA(Ala). Also edits incorrectly charged Ser-tRNA(Ala) and Gly-tRNA(Ala) via its editing domain. In Rhizobium etli (strain ATCC 51251 / DSM 11541 / JCM 21823 / NBRC 15573 / CFN 42), this protein is Alanine--tRNA ligase.